The following is a 63-amino-acid chain: Hyphancin-3D (63 aa).

Residues 1–22 form the signal peptide; that stretch reads MNFSRIIFLVFACFVALASVSA. A propeptide spans 23–26 (removed by a dipeptidylpeptidase); it reads APEP. Leucine 61 carries the post-translational modification Leucine amide.

The protein belongs to the cecropin family.

Its subcellular location is the secreted. Its function is as follows. Has antibacterial activity. The chain is Hyphancin-3D from Hyphantria cunea (Fall webworm moth).